A 98-amino-acid chain; its full sequence is Large ribosomal subunit protein uL23 (98 aa).

Belongs to the universal ribosomal protein uL23 family. Part of the 50S ribosomal subunit. Contacts protein L29, and trigger factor when it is bound to the ribosome.

One of the early assembly proteins it binds 23S rRNA. One of the proteins that surrounds the polypeptide exit tunnel on the outside of the ribosome. Forms the main docking site for trigger factor binding to the ribosome. The sequence is that of Large ribosomal subunit protein uL23 from Ruegeria sp. (strain TM1040) (Silicibacter sp.).